Consider the following 885-residue polypeptide: Alanine--tRNA ligase (885 aa).

Residues His571, His575, Cys674, and His678 each contribute to the Zn(2+) site.

The protein belongs to the class-II aminoacyl-tRNA synthetase family. The cofactor is Zn(2+).

Its subcellular location is the cytoplasm. The enzyme catalyses tRNA(Ala) + L-alanine + ATP = L-alanyl-tRNA(Ala) + AMP + diphosphate. Its function is as follows. Catalyzes the attachment of alanine to tRNA(Ala) in a two-step reaction: alanine is first activated by ATP to form Ala-AMP and then transferred to the acceptor end of tRNA(Ala). Also edits incorrectly charged Ser-tRNA(Ala) and Gly-tRNA(Ala) via its editing domain. The polypeptide is Alanine--tRNA ligase (Clavibacter michiganensis subsp. michiganensis (strain NCPPB 382)).